Reading from the N-terminus, the 1906-residue chain is MQSFRERCGFHGKQQNYQQTSQETSRLENYRQPSQAGLSCDRQRLLAKDYYNPQPYPSYEGGAGTPSGTAAAVAADKYHRGSKALPTQQGLQGRPAFPGYGVQDSSPYPGRYAGEESLQAWGAPQPPPPQPQPLPAGVAKYDENLMKKTAVPPSRQYAEQGAQVPFRTHSLHVQQPPPPQQPLAYPKLQRQKLQNDIASPLPFPQGTHFPQHSQSFPTSSTYSSSVQGGGQGAHSYKSCTAPTAQPHDRPLTASSSLAPGQRVQNLHAYQSGRLSYDQQQQQQQQQQQQQQALQSRHHAQETLHYQNLAKYQHYGQQGQGYCQPDAAVRTPEQYYQTFSPSSSHSPARSVGRSPSYSSTPSPLMPNLENFPYSQQPLSTGAFPAGITDHSHFMPLLNPSPTDATSSVDTQAGNCKPLQKDKLPENLLSDLSLQSLTALTSQVENISNTVQQLLLSKAAVPQKKGVKNLVSRTPEQHKSQHCSPEGSGYSAEPAGTPLSEPPSSTPQSTHAEPQEADYLSGSEDPLERSFLYCNQARGSPARVNSNSKAKPESVSTCSVTSPDDMSTKSDDSFQSLHGSLPLDSFSKFVAGERDCPRLLLSALAQEDLASEILGLQEAIGEKADKAWAEAPSLVKDSSKPPFSLENHSACLDSVAKSAWPRPGEPEALPDSLQLDKGGNAKDFSPGLFEDPSVAFATPDPKKTTGPLSFGTKPTLGVPAPDPTTAAFDCFPDTTAASSADSANPFAWPEENLGDACPRWGLHPGELTKGLEQGGKASDGISKGDTHEASACLGFQEEDPPGEKVASLPGDFKQEEVGGVKEEAGGLLQCPEVAKADRWLEDSRHCCSTADFGDLPLLPPTSRKEDLEAEEEYSSLCELLGSPEQRPGMQDPLSPKAPLICTKEEVEEVLDSKAGWGSPCHLSGESVILLGPTVGTESKVQSWFESSLSHMKPGEEGPDGERAPGDSTTSDASLAQKPNKPAVPEAPIAKKEPVPRGKSLRSRRVHRGLPEAEDSPCRAPVLPKDLLLPESCTGPPQGQMEGAGAPGRGASEGLPRMCTRSLTALSEPRTPGPPGLTTTPAPPDKLGGKQRAAFKSGKRVGKPSPKAASSPSNPAALPVASDSSPMGSKTKETDSPSTPGKDQRSMILRSRTKTQEIFHSKRRRPSEGRLPNCRATKKLLDNSHLPATFKVSSSPQKEGRVSQRARVPKPGAGSKLSDRPLHALKRKSAFMAPVPTKKRNLVLRSRSSSSSNASGNGGDGKEERPEGSPTLFKRMSSPKKAKPTKGNGEPATKLPPPETPDACLKLASRAAFQGAMKTKVLPPRKGRGLKLEAIVQKITSPSLKKFACKAPGASPGNPLSPSLSDKDRGLKGAGGSPVGVEEGLVNVGTGQKLPTSGADPLCRNPTNRSLKGKLMNSKKLSSTDCFKTEAFTSPEALQPGGTALAPKKRSRKGRAGAHGLSKGPLEKRPYLGPALLLTPRDRASGTQGASEDNSGGGGKKPKMEELGLASQPPEGRPCQPQTRAQKQPGHTNYSSYSKRKRLTRGRAKNTTSSPCKGRAKRRRQQQVLPLDPAEPEIRLKYISSCKRLRSDSRTPAFSPFVRVEKRDAFTTICTVVNSPGDAPKPHRKPSSSASSSSSSSSFSLDAAGASLATLPGGSILQPRPSLPLSSTMHLGPVVSKALSTSCLVCCLCQNPANFKDLGDLCGPYYPEHCLPKKKPKLKEKVRPEGTCEEASLPLERTLKGPECAAAATAGKPPRPDGPADPAKQGPLRTSARGLSRRLQSCYCCDGREDGGEEAAPADKGRKHECSKEAPAEPGGEAQEHWVHEACAVWTGGVYLVAGKLFGLQEAMKVAVDMMCSSCQEAGATIGCCHKGCLHTYHYPCASDAGCIFIEENFSLKCPKHKRLP.

Disordered stretches follow at residues 1–261 (MQSF…APGQ), 273–299 (RLSY…RHHA), 335–370 (YQTF…LENF), 469–520 (VSRT…YLSG), 538–571 (SPAR…SDDS), and 656–712 (SAWP…GTKP). Residues 13–24 (KQQNYQQTSQET) are compositionally biased toward polar residues. Over residues 66-75 (PSGTAAAVAA) the composition is skewed to low complexity. Over residues 124–134 (PQPPPPQPQPL) the composition is skewed to pro residues. Residues 213 to 226 (SQSFPTSSTYSSSV) show a composition bias toward low complexity. A compositionally biased stretch (polar residues) spans 252–261 (TASSSLAPGQ). Composition is skewed to low complexity over residues 278-291 (QQQQ…QQQQ) and 339-353 (SPSS…VGRS). Phosphoserine is present on residues Ser-339 and Ser-345. Position 472 is a phosphothreonine (Thr-472). Residues 541–563 (RVNSNSKAKPESVSTCSVTSPDD) are compositionally biased toward polar residues. 2 positions are modified to phosphoserine: Ser-568 and Ser-683. The residue at position 696 (Thr-696) is a Phosphothreonine. Ser-805 is modified (phosphoserine). Lys-811 participates in a covalent cross-link: Glycyl lysine isopeptide (Lys-Gly) (interchain with G-Cter in SUMO2). Residue Lys-819 forms a Glycyl lysine isopeptide (Lys-Gly) (interchain with G-Cter in SUMO1) linkage. A phosphoserine mark is found at Ser-880 and Ser-892. Lys-901 is covalently cross-linked (Glycyl lysine isopeptide (Lys-Gly) (interchain with G-Cter in SUMO1); alternate). Lys-901 participates in a covalent cross-link: Glycyl lysine isopeptide (Lys-Gly) (interchain with G-Cter in SUMO2); alternate. The segment covering 937–947 (KVQSWFESSLS) has biased composition (polar residues). Disordered regions lie at residues 937 to 1299 (KVQS…ETPD), 1344 to 1570 (FACK…PLDP), 1613 to 1637 (VVNS…SSSS), 1746 to 1775 (AAAA…SARG), and 1794 to 1819 (EEAA…GGEA). Residues 950-962 (KPGEEGPDGERAP) show a composition bias toward basic and acidic residues. Basic residues predominate over residues 996 to 1005 (KSLRSRRVHR). Position 1064 is a phosphoserine (Ser-1064). Thr-1068 is subject to Phosphothreonine. Positions 1101 to 1119 (PSPKAASSPSNPAALPVAS) are enriched in low complexity. Ser-1122 carries the phosphoserine modification. 2 short sequence motifs (nuclear localization signal) span residues 1160–1177 (RRRP…TKKL) and 1223–1240 (KRKS…RNLV). A compositionally biased stretch (low complexity) spans 1242 to 1252 (RSRSSSSSNAS). Phosphoserine occurs at positions 1352, 1358, and 1374. A Glycyl lysine isopeptide (Lys-Gly) (interchain with G-Cter in SUMO2) cross-link involves residue Lys-1425. Phosphoserine is present on Ser-1431. Over residues 1444–1453 (PKKRSRKGRA) the composition is skewed to basic residues. 2 stretches are compositionally biased toward polar residues: residues 1482–1491 (SGTQGASEDN) and 1517–1534 (QPQT…YSSY). A compositionally biased stretch (basic residues) spans 1535 to 1545 (SKRKRLTRGRA). Residues 1628 to 1637 (SSSASSSSSS) show a composition bias toward low complexity. Residues 1780-1835 (LQSCYCCDGREDGGEEAAPADKGRKHECSKEAPAEPGGEAQEHWVHEACAVWTGGV) form a C2HC pre-PHD-type zinc finger. A compositionally biased stretch (basic and acidic residues) spans 1798–1812 (PADKGRKHECSKEAP). Residues 1855–1903 (MMCSSCQEAGATIGCCHKGCLHTYHYPCASDAGCIFIEENFSLKCPKHK) form a PHD-type zinc finger.

As to expression, expressed in all tissues examined with higher expression in the heart and brain. No expression was seen in the corpus callosum of the brain.

The protein resides in the cytoplasm. The protein localises to the nucleus. Functionally, transcriptional regulator of the circadian clock components: CLOCK, BMAL1, BMAL2, PER1/3, CRY1/2, NR1D1/2 and RORA/C. Positively regulates the transcriptional activity of CLOCK a core component of the circadian clock. Regulates transcription through chromatin remodeling by interacting with other proteins in chromatin as well as proteins in the basic transcriptional machinery. May be important for embryonic and postnatal development. May be involved in neuronal differentiation. This is Retinoic acid-induced protein 1 (RAI1) from Homo sapiens (Human).